The primary structure comprises 403 residues: Tryptophan 2,3-dioxygenase (403 aa).

Residue Phe69–His73 coordinates substrate. The PLD motif; required for enzymatic activity motif lies at Pro133 to Asp135. Position 140 (Arg140) interacts with substrate. His327 contributes to the heme binding site. Thr341 is a binding site for substrate.

The protein belongs to the tryptophan 2,3-dioxygenase family. As to quaternary structure, homotetramer. Dimer of dimers. The cofactor is heme. Expressed in body wall muscle cells, hypodermis, PLM neurons and touch-receptor neurons.

It carries out the reaction L-tryptophan + O2 = N-formyl-L-kynurenine. It participates in amino-acid degradation; L-tryptophan degradation via kynurenine pathway; L-kynurenine from L-tryptophan: step 1/2. Heme-dependent dioxygenase that catalyzes the oxidative cleavage of the L-tryptophan (L-Trp) pyrrole ring and converts L-tryptophan to N-formyl-L-kynurenine. Catalyzes the oxidative cleavage of the indole moiety. Involved in regulation of protein homeostasis, longevity and reproducive life span. Specifically regulates proteotoxicity due to age-related aggregation of proteins like alpha-synuclein, via its effects on tryptophan metabolism. This chain is Tryptophan 2,3-dioxygenase, found in Caenorhabditis elegans.